The sequence spans 402 residues: Zinc finger protein 586 (402 aa).

A KRAB domain is found at 15 to 87 (VTFEDVAVNF…DQGGHSGERP (73 aa)). The C2H2-type 1; degenerate zinc-finger motif lies at 88–116 (YECGEYRKLFKNKSCLTEPRRDHKHRNVR). The segment at 122 to 144 (YECSKYGKLFHQKPTLHIHERFH) adopts a C2H2-type 2; degenerate zinc-finger fold. The segment at 150-172 (YECSECGKSFHQSSSLLQRQTLH) adopts a C2H2-type 3; degenerate zinc-finger fold. 8 C2H2-type zinc fingers span residues 178–200 (YECIECGKAFAEKSSLINHRKVH), 206–228 (YECNECGKSFAYTSSLIKHRRIH), 234–256 (YECSECGRSFAENSSLIKHLRVH), 262–284 (YECVECGKSFRRSSSLLQHQRVH), 290–312 (YECSECGKSFSLRSNLIHHQRVH), 317–339 (HECGQCGKSFSRKSSLIIHLRVH), 345–367 (YECSDCGKSFAENSSLIKHLRVH), and 373–395 (YECIDCGKSFRHSSSFRRHQRVH).

The protein belongs to the krueppel C2H2-type zinc-finger protein family.

It localises to the nucleus. May be involved in transcriptional regulation. The chain is Zinc finger protein 586 (ZNF586) from Homo sapiens (Human).